Consider the following 70-residue polypeptide: Protein SlyX homolog (70 aa).

It belongs to the SlyX family.

The protein is Protein SlyX homolog of Shewanella piezotolerans (strain WP3 / JCM 13877).